Here is a 345-residue protein sequence, read N- to C-terminus: GTPase Obg (345 aa).

The Obg domain occupies 1–159 (MKFIDEAIIK…RTLRLELKLL (159 aa)). The disordered stretch occupies residues 127–148 (NARFKSSTNRAPRKTTQGKPGE). Positions 130–144 (FKSSTNRAPRKTTQG) are enriched in polar residues. One can recognise an OBG-type G domain in the interval 160–334 (ADVGLLGLPN…LIHAVMQYLE (175 aa)). Residues 166 to 173 (GLPNAGKS), 191 to 195 (FTTLH), 213 to 216 (DIPG), 284 to 287 (NKTD), and 315 to 317 (SAL) contribute to the GTP site. Ser-173 and Thr-193 together coordinate Mg(2+).

Belongs to the TRAFAC class OBG-HflX-like GTPase superfamily. OBG GTPase family. As to quaternary structure, monomer. Requires Mg(2+) as cofactor.

It is found in the cytoplasm. In terms of biological role, an essential GTPase which binds GTP, GDP and possibly (p)ppGpp with moderate affinity, with high nucleotide exchange rates and a fairly low GTP hydrolysis rate. Plays a role in control of the cell cycle, stress response, ribosome biogenesis and in those bacteria that undergo differentiation, in morphogenesis control. This chain is GTPase Obg, found in Nitrosococcus oceani (strain ATCC 19707 / BCRC 17464 / JCM 30415 / NCIMB 11848 / C-107).